The chain runs to 156 residues: Pilin-like protein PilA1 (156 aa).

A propeptide spans 1-5 (MTRRG) (leader sequence). At Leu-6 the chain carries N-methylleucine. A helical membrane pass occupies residues 6-29 (LTLLELLLVLGILGVLLGLALPLL).

It is found in the cell inner membrane. Its subcellular location is the cell outer membrane. The protein localises to the periplasm. In terms of biological role, plays an essential role in natural DNA transformation but is not required for pilus biogenesis. The protein is Pilin-like protein PilA1 (pilA1) of Thermus thermophilus (strain ATCC BAA-163 / DSM 7039 / HB27).